The primary structure comprises 269 residues: Eukaryotic translation initiation factor 3 subunit G-1 (269 aa).

The region spanning 188–266 (AAIRISNLSE…LILSVEWSKP (79 aa)) is the RRM domain.

The protein belongs to the eIF-3 subunit G family. In terms of assembly, component of the eukaryotic translation initiation factor 3 (eIF-3) complex. The eIF-3 complex interacts with pix.

The protein localises to the cytoplasm. Functionally, RNA-binding component of the eukaryotic translation initiation factor 3 (eIF-3) complex, which is involved in protein synthesis of a specialized repertoire of mRNAs and, together with other initiation factors, stimulates binding of mRNA and methionyl-tRNAi to the 40S ribosome. The eIF-3 complex specifically targets and initiates translation of a subset of mRNAs involved in cell proliferation. This subunit can bind 18S rRNA. This is Eukaryotic translation initiation factor 3 subunit G-1 from Drosophila virilis (Fruit fly).